The sequence spans 571 residues: Proline--tRNA ligase (571 aa).

The protein belongs to the class-II aminoacyl-tRNA synthetase family. ProS type 1 subfamily. Homodimer.

It is found in the cytoplasm. The enzyme catalyses tRNA(Pro) + L-proline + ATP = L-prolyl-tRNA(Pro) + AMP + diphosphate. Functionally, catalyzes the attachment of proline to tRNA(Pro) in a two-step reaction: proline is first activated by ATP to form Pro-AMP and then transferred to the acceptor end of tRNA(Pro). As ProRS can inadvertently accommodate and process non-cognate amino acids such as alanine and cysteine, to avoid such errors it has two additional distinct editing activities against alanine. One activity is designated as 'pretransfer' editing and involves the tRNA(Pro)-independent hydrolysis of activated Ala-AMP. The other activity is designated 'posttransfer' editing and involves deacylation of mischarged Ala-tRNA(Pro). The misacylated Cys-tRNA(Pro) is not edited by ProRS. In Actinobacillus pleuropneumoniae serotype 7 (strain AP76), this protein is Proline--tRNA ligase.